The sequence spans 456 residues: L-2-hydroxyglutarate dehydrogenase, mitochondrial (456 aa).

The transit peptide at 1 to 20 directs the protein to the mitochondrion; the sequence is MLKTSFLLSKRNAVSLSRVL.

Belongs to the L2HGDH family. FAD is required as a cofactor.

It is found in the mitochondrion. It carries out the reaction (S)-2-hydroxyglutarate + A = 2-oxoglutarate + AH2. The protein is L-2-hydroxyglutarate dehydrogenase, mitochondrial of Nematostella vectensis (Starlet sea anemone).